The primary structure comprises 346 residues: Ferredoxin--NADP reductase 1 (346 aa).

Glu37, Lys45, Tyr49, Ile89, Pro124, Asp287, and Ser328 together coordinate FAD.

It belongs to the ferredoxin--NADP reductase type 2 family. As to quaternary structure, homodimer. FAD is required as a cofactor.

It carries out the reaction 2 reduced [2Fe-2S]-[ferredoxin] + NADP(+) + H(+) = 2 oxidized [2Fe-2S]-[ferredoxin] + NADPH. This Bacillus pumilus (strain SAFR-032) protein is Ferredoxin--NADP reductase 1.